A 59-amino-acid chain; its full sequence is SPbeta prophage-derived uncharacterized protein YosB (59 aa).

The chain is SPbeta prophage-derived uncharacterized protein YosB (yosB) from Bacillus subtilis (strain 168).